We begin with the raw amino-acid sequence, 574 residues long: Cholinesterase (574 aa).

Residue Asn-57 is glycosylated (N-linked (GlcNAc...) asparagine). An intrachain disulfide couples Cys-65 to Cys-92. N-linked (GlcNAc...) asparagine glycosylation is present at Asn-106. Residue 116–117 (GG) participates in substrate binding. Catalysis depends on Ser-198, which acts as the Acyl-ester intermediate. Residue Ser-198 is modified to Phosphoserine. Asn-241 and Asn-256 each carry an N-linked (GlcNAc...) asparagine glycan. Residues Cys-252 and Cys-263 are joined by a disulfide bond. The active-site Charge relay system is Glu-325. N-linked (GlcNAc...) asparagine glycosylation occurs at Asn-341. Cys-400 and Cys-519 are disulfide-bonded. The Charge relay system role is filled by His-438. Residues Asn-455, Asn-481, and Asn-486 are each glycosylated (N-linked (GlcNAc...) asparagine).

It belongs to the type-B carboxylesterase/lipase family. In terms of assembly, homotetramer; disulfide-linked. Dimer of dimers. In terms of tissue distribution, detected in blood plasma (at protein level). Present in most cells except erythrocytes.

The protein localises to the secreted. It catalyses the reaction an acylcholine + H2O = a carboxylate + choline + H(+). Functionally, esterase with broad substrate specificity. Contributes to the inactivation of the neurotransmitter acetylcholine. Can degrade neurotoxic organophosphate esters. This is Cholinesterase (BCHE) from Equus caballus (Horse).